Reading from the N-terminus, the 196-residue chain is Probable GTP-binding protein EngB (196 aa).

One can recognise an EngB-type G domain in the interval 21–195 (DVSEICLIGR…YELINKLLGS (175 aa)). GTP contacts are provided by residues 29–36 (GRSNVGKS), 56–60 (GKTRL), 75–78 (DAPG), 142–145 (TKLD), and 174–176 (ISN). The Mg(2+) site is built by Ser-36 and Thr-58.

It belongs to the TRAFAC class TrmE-Era-EngA-EngB-Septin-like GTPase superfamily. EngB GTPase family. The cofactor is Mg(2+).

Its function is as follows. Necessary for normal cell division and for the maintenance of normal septation. In Mycoplasma capricolum subsp. capricolum (strain California kid / ATCC 27343 / NCTC 10154), this protein is Probable GTP-binding protein EngB.